Consider the following 772-residue polypeptide: Semaphorin-3A (772 aa).

An N-terminal signal peptide occupies residues 1-20; it reads MGWFTGIACLFWGILLTARA. In terms of domain architecture, Sema spans 31-514; that stretch reads RLKLSYKEML…STAGVAQLPL (484 aa). Asparagine 53 carries an N-linked (GlcNAc...) asparagine glycan. A disulfide bridge links cysteine 103 with cysteine 114. Asparagine 125 carries N-linked (GlcNAc...) asparagine glycosylation. 4 disulfides stabilise this stretch: cysteine 132-cysteine 141, cysteine 269-cysteine 381, cysteine 293-cysteine 341, and cysteine 517-cysteine 535. Residues 577 to 665 enclose the Ig-like C2-type domain; sequence HGHSLEERII…GFMQTLLKVT (89 aa). Asparagine 591 carries N-linked (GlcNAc...) asparagine glycosylation. The cysteines at positions 650 and 723 are disulfide-linked. A compositionally biased stretch (basic and acidic residues) spans 677-691; sequence LLHKDDDGDGSKTKE. 2 disordered regions span residues 677-698 and 729-772; these read LLHKDDDGDGSKTKEMSSSMTP and RDRK…PRSV. Positions 729 to 738 are enriched in basic residues; that stretch reads RDRKQRRQRP. Residues 750–772 show a composition bias toward basic and acidic residues; the sequence is HMQESKKGRNRRTHEFERAPRSV.

Belongs to the semaphorin family. In terms of assembly, interacts with PLXND1. Expressed in the dorsal root ganglia.

The protein localises to the secreted. In terms of biological role, may be involved in guiding growing axons towards their targets by forming a molecular boundary that instructs axons to engage in the formation of specific nerve tracts. Binds to neuropilin. Involved in the development of the olfactory system and in neuronal control of puberty. This is Semaphorin-3A (Sema3a) from Rattus norvegicus (Rat).